A 325-amino-acid polypeptide reads, in one-letter code: GTP 3',8-cyclase (325 aa).

A Radical SAM core domain is found at 1–226; sequence MNTVNYLRIS…EGACYGNGPA (226 aa). Arginine 8 contributes to the GTP binding site. Cysteine 15 and cysteine 19 together coordinate [4Fe-4S] cluster. Tyrosine 21 is an S-adenosyl-L-methionine binding site. Cysteine 22 contacts [4Fe-4S] cluster. Arginine 60 contributes to the GTP binding site. Glycine 64 is a binding site for S-adenosyl-L-methionine. Serine 91 provides a ligand contact to GTP. S-adenosyl-L-methionine is bound at residue serine 115. Lysine 152 lines the GTP pocket. Methionine 186 contacts S-adenosyl-L-methionine. [4Fe-4S] cluster contacts are provided by cysteine 249 and cysteine 252. 254–256 is a GTP binding site; sequence RVR. Position 266 (cysteine 266) interacts with [4Fe-4S] cluster.

It belongs to the radical SAM superfamily. MoaA family. In terms of assembly, monomer and homodimer. [4Fe-4S] cluster serves as cofactor.

It carries out the reaction GTP + AH2 + S-adenosyl-L-methionine = (8S)-3',8-cyclo-7,8-dihydroguanosine 5'-triphosphate + 5'-deoxyadenosine + L-methionine + A + H(+). It functions in the pathway cofactor biosynthesis; molybdopterin biosynthesis. In terms of biological role, catalyzes the cyclization of GTP to (8S)-3',8-cyclo-7,8-dihydroguanosine 5'-triphosphate. The polypeptide is GTP 3',8-cyclase (Gloeobacter violaceus (strain ATCC 29082 / PCC 7421)).